Consider the following 606-residue polypeptide: MSEIIAYKLNGELIDTQSINGREAVAQPVYFDNSPDALHVIRHSCAHLMAQAIKSLYPNAKFFVGPNVEDGFYYDFRVDEAGTKLGESDLEAIEKKMKELAEAKFEITKICSTKAAMSEKFKNDDLKQEVLKRIPEGEVSSYAQGDFEDLCRGPHVPNTKFLRFFKLTRVAGAYLGGDETREMLNRIYGTAYADKASLAEHIRIIEEAKKRDHRKLGVEMKLFGFDEEVGGGLPIWLPNGGRLRSKLEQILYKAHRDRGYEPVRGPELLKADVWKRSGHYANYKENMYFTTIDDAEYGIKPMNCVGHIKVYQTEIRSYRDLPLKFFEYGVVHRHEKSGVLHGLFRVREFAQDDSHIFCMPSQIKQNILEILSFAGKIMQNFGFEYEMEISTKPAKAIGSDEIWDIATNALKEALDENGFKYGIDEGGGAFYGPKIDIKITDALKRKWQCGTIQVDFNLPERFDLGYIDANNERQRPVMLHRALLGSFERFIGILIEHTAGELPFFIAPTQVVIVPISDAHLDYAKEIARELRKFNIDSEVASKNESLNKRIRTAEKQRVPMIIVLGDNEVANRSVALRDRQARTQSDMSLAEFLNLTKEKLSEVHF.

The catalytic stretch occupies residues 212 to 503; the sequence is DHRKLGVEMK…LIEHTAGELP (292 aa). Zn(2+)-binding residues include cysteine 304, histidine 355, and histidine 480.

Belongs to the class-II aminoacyl-tRNA synthetase family. As to quaternary structure, homodimer. Zn(2+) serves as cofactor.

It is found in the cytoplasm. It catalyses the reaction tRNA(Thr) + L-threonine + ATP = L-threonyl-tRNA(Thr) + AMP + diphosphate + H(+). Its function is as follows. Catalyzes the attachment of threonine to tRNA(Thr) in a two-step reaction: L-threonine is first activated by ATP to form Thr-AMP and then transferred to the acceptor end of tRNA(Thr). Also edits incorrectly charged L-seryl-tRNA(Thr). The protein is Threonine--tRNA ligase of Campylobacter curvus (strain 525.92).